The sequence spans 79 residues: Translational regulator CsrA (79 aa).

Belongs to the CsrA/RsmA family. Homodimer; the beta-strands of each monomer intercalate to form a hydrophobic core, while the alpha-helices form wings that extend away from the core.

It localises to the cytoplasm. Functionally, a translational regulator that binds mRNA to regulate translation initiation and/or mRNA stability. Usually binds in the 5'-UTR at or near the Shine-Dalgarno sequence preventing ribosome-binding, thus repressing translation. Its main target seems to be the major flagellin gene, while its function is anatagonized by FliW. The polypeptide is Translational regulator CsrA (Maridesulfovibrio salexigens (strain ATCC 14822 / DSM 2638 / NCIMB 8403 / VKM B-1763) (Desulfovibrio salexigens)).